A 78-amino-acid chain; its full sequence is MKVSSHAMVPTHEIIPREEIPLLLEKYNIKLQQLPKLLDTDPLVLEVEAAPGDVLKITRMSPTAGESTYYRLVIATSL.

This sequence belongs to the archaeal Rpo5/eukaryotic RPB5 RNA polymerase subunit family. As to quaternary structure, part of the RNA polymerase complex.

Its subcellular location is the cytoplasm. It catalyses the reaction RNA(n) + a ribonucleoside 5'-triphosphate = RNA(n+1) + diphosphate. In terms of biological role, DNA-dependent RNA polymerase (RNAP) catalyzes the transcription of DNA into RNA using the four ribonucleoside triphosphates as substrates. The sequence is that of DNA-directed RNA polymerase subunit Rpo5 from Methanococcus maripaludis (strain C7 / ATCC BAA-1331).